The chain runs to 103 residues: Flagellar hook-basal body complex protein FliE (103 aa).

Belongs to the FliE family.

The protein resides in the bacterial flagellum basal body. This Erwinia tasmaniensis (strain DSM 17950 / CFBP 7177 / CIP 109463 / NCPPB 4357 / Et1/99) protein is Flagellar hook-basal body complex protein FliE.